The chain runs to 227 residues: Ribose-5-phosphate isomerase A (227 aa).

Residues 30–33 (TGST), 86–89 (DGAD), and 99–104 (KGMGGA) contribute to the substrate site. E108 serves as the catalytic Proton acceptor. A substrate-binding site is contributed by K126.

The protein belongs to the ribose 5-phosphate isomerase family. As to quaternary structure, homodimer.

The catalysed reaction is aldehydo-D-ribose 5-phosphate = D-ribulose 5-phosphate. It functions in the pathway carbohydrate degradation; pentose phosphate pathway; D-ribose 5-phosphate from D-ribulose 5-phosphate (non-oxidative stage): step 1/1. In terms of biological role, involved in the first step of the non-oxidative branch of the pentose phosphate pathway. It catalyzes the reversible conversion of ribose-5-phosphate to ribulose 5-phosphate. Can also act on D-ribose-5-diphosphate and D-ribose-5-triphosphate as substrate. The protein is Ribose-5-phosphate isomerase A of Thermus thermophilus (strain ATCC BAA-163 / DSM 7039 / HB27).